The chain runs to 63 residues: Metallothionein-1 (63 aa).

2 consecutive repeats follow at residues 23 to 30 (CGDKCECK) and 56 to 63 (CGDKCECK).

This sequence belongs to the metallothionein superfamily. Type 9 family.

Functionally, the metallothioneins are involved in the cellular sequestration of toxic metal ions. The protein is Metallothionein-1 (MT-I) of Candida glabrata (strain ATCC 2001 / BCRC 20586 / JCM 3761 / NBRC 0622 / NRRL Y-65 / CBS 138) (Yeast).